The chain runs to 350 residues: tRNA uridine(34) hydroxylase (350 aa).

The region spanning 146–240 (DDPDALFIDM…YARKAREQGL (95 aa)) is the Rhodanese domain. The active-site Cysteine persulfide intermediate is Cys-200.

This sequence belongs to the TrhO family.

The catalysed reaction is uridine(34) in tRNA + AH2 + O2 = 5-hydroxyuridine(34) in tRNA + A + H2O. In terms of biological role, catalyzes oxygen-dependent 5-hydroxyuridine (ho5U) modification at position 34 in tRNAs, the first step in 5-carboxymethoxyuridine (cmo5U) biosynthesis. May be part of an alternate pathway, which is able to bypass cmo5U biogenesis in a subset of tRNAs under aerobic conditions. This Escherichia coli O127:H6 (strain E2348/69 / EPEC) protein is tRNA uridine(34) hydroxylase.